The sequence spans 131 residues: Small ribosomal subunit protein eS24 (131 aa).

The segment at 93–131 (RHGLYEKKKTSRKQRKERKNRMKKVRGTKKASVGAAGKK) is disordered. Residues 101 to 121 (KTSRKQRKERKNRMKKVRGTK) show a composition bias toward basic residues.

The protein belongs to the eukaryotic ribosomal protein eS24 family. In terms of assembly, component of the small ribosomal subunit. Part of the small subunit (SSU) processome, composed of more than 70 proteins and the RNA chaperone small nucleolar RNA (snoRNA) U3.

The protein localises to the cytoplasm. Its subcellular location is the nucleus. It localises to the nucleolus. Component of the small ribosomal subunit. The ribosome is a large ribonucleoprotein complex responsible for the synthesis of proteins in the cell. Required for processing of pre-rRNA and maturation of 40S ribosomal subunits. Part of the small subunit (SSU) processome, first precursor of the small eukaryotic ribosomal subunit. During the assembly of the SSU processome in the nucleolus, many ribosome biogenesis factors, an RNA chaperone and ribosomal proteins associate with the nascent pre-rRNA and work in concert to generate RNA folding, modifications, rearrangements and cleavage as well as targeted degradation of pre-ribosomal RNA by the RNA exosome. The chain is Small ribosomal subunit protein eS24 (rps24) from Ictalurus punctatus (Channel catfish).